Reading from the N-terminus, the 851-residue chain is ATP-dependent DNA helicase DDX31 (851 aa).

The disordered stretch occupies residues 1-196 (MAPDLASQRH…STSDRNQEER (196 aa)). The Q motif signature appears at 230–259 (AAFHELGLHPHLISTINTVLKMSSMTSVQK). Residues 262–443 (IPVLLEGRDA…DISLHDPVSI (182 aa)) enclose the Helicase ATP-binding domain. 275–282 (SQTGSGKT) contacts ATP. The DEAD box motif lies at 388 to 391 (DEAD). Residues 480–659 (SLKQHVTVVP…VSEIKMEDIL (180 aa)) enclose the Helicase C-terminal domain. Disordered regions lie at residues 762–784 (KKRKAHVKRPDLHKKTQSKHSLA) and 804–851 (KQNA…SQKV). The residue at position 828 (Arg828) is an Omega-N-methylarginine. Basic and acidic residues predominate over residues 841-851 (VQRDSKTSQKV).

It belongs to the DEAD box helicase family. DDX31/DBP7 subfamily. Interacts with NPM1; this interaction prevents interaction between NPM1 and HDM2. As to expression, weakly or undetectably expressed in normal organs. Up-regulated in renal cell carcinoma.

It is found in the nucleus. The protein resides in the nucleolus. The catalysed reaction is ATP + H2O = ADP + phosphate + H(+). Functionally, may have DNA helicase activity and RNA helicase activity. Probably have ssDNA and RNA dependent ATPase activity. Plays a role in ribosome biogenesis and TP53/p53 regulation through its interaction with NPM1. The polypeptide is ATP-dependent DNA helicase DDX31 (Homo sapiens (Human)).